A 376-amino-acid chain; its full sequence is MPVKLKWPWLGIAIPSFLIASIGYCAHYFILLNFLSLRKQLWYQFCQTMIWLSYYLAIYTPPGKPPTNFKPSKNEWKVYCKKCKCYKPERSHHCKTCNQCVLMMDHHCPWTMNCVGYNNFPHFIRFLFWVIVGTTSLAIFLTTRIHSIWVHRSSPSYLYYKSELIFLTILTPLNAFILLTISILMIRCLFNQIFNGRSQIESWEMDRLETLARMSKLLPILIENVWYIFPNLRNEHVESQAEALLNKKRLSLDELVNFPYDLGPFRNAIQLLGTPPLWLYPFSGPQDDGLHFQKNEESMIEDPNSLNDIILCLPWPPDSTKHLNSTSEHTSNVQIISEEGEQVIRIRTPEKKLSRSEWLNDWGESLEDFGVDVDVE.

The Cytoplasmic segment spans residues 1–11 (MPVKLKWPWLG). Residues 12–32 (IAIPSFLIASIGYCAHYFILL) traverse the membrane as a helical segment. Residues 33 to 40 (NFLSLRKQ) lie on the Lumenal side of the membrane. The helical transmembrane segment at 41-61 (LWYQFCQTMIWLSYYLAIYTP) threads the bilayer. The Cytoplasmic portion of the chain corresponds to 62–122 (PGKPPTNFKP…NCVGYNNFPH (61 aa)). Residues 78 to 128 (VYCKKCKCYKPERSHHCKTCNQCVLMMDHHCPWTMNCVGYNNFPHFIRFLF) enclose the DHHC domain. C108 functions as the S-palmitoyl cysteine intermediate in the catalytic mechanism. The helical transmembrane segment at 123–143 (FIRFLFWVIVGTTSLAIFLTT) threads the bilayer. The Lumenal segment spans residues 144–163 (RIHSIWVHRSSPSYLYYKSE). Residues 164-184 (LIFLTILTPLNAFILLTISIL) form a helical membrane-spanning segment. Over 185-376 (MIRCLFNQIF…EDFGVDVDVE (192 aa)) the chain is Cytoplasmic.

The protein belongs to the DHHC palmitoyltransferase family. PFA4 subfamily.

The protein localises to the endoplasmic reticulum membrane. The enzyme catalyses L-cysteinyl-[protein] + hexadecanoyl-CoA = S-hexadecanoyl-L-cysteinyl-[protein] + CoA. Functionally, mediates the reversible addition of palmitate to target proteins, thereby regulating their membrane association and biological function. This Candida glabrata (strain ATCC 2001 / BCRC 20586 / JCM 3761 / NBRC 0622 / NRRL Y-65 / CBS 138) (Yeast) protein is Palmitoyltransferase PFA4.